The sequence spans 702 residues: Putative methyltransferase NSUN7 (702 aa).

Cysteine 424 functions as the Nucleophile in the catalytic mechanism. Disordered regions lie at residues 522–541 (KSSKREKKKKKSKTSLTKAA), 567–593 (ETVTKPSLPQKNTAQVGASSQTRKHKL), and 675–702 (PTPSLSRKGEKPKDDTRSSLLRPPRRWL). A compositionally biased stretch (basic residues) spans 523-534 (SSKREKKKKKSK). Residues 567 to 587 (ETVTKPSLPQKNTAQVGASSQ) are compositionally biased toward polar residues. Basic and acidic residues predominate over residues 681 to 691 (RKGEKPKDDTR).

The protein belongs to the class I-like SAM-binding methyltransferase superfamily. RsmB/NOP family.

In terms of biological role, may have S-adenosyl-L-methionine-dependent methyl-transferase activity. The protein is Putative methyltransferase NSUN7 (NSUN7) of Macaca fascicularis (Crab-eating macaque).